The sequence spans 99 residues: MAVNPLDFLKNMSSVKNNIDNIKKEISKITVCGKAGSNIVTIEMDGEFNVKKVSINKEFFDDLDNDAFEQMIKSALNDAVSKVKEEIKLKTMGVLPFGM.

This sequence belongs to the YbaB/EbfC family. Homodimer. Can form tetramers and octamers in solution.

The protein resides in the cytoplasm. It localises to the nucleoid. Its function is as follows. Binds to DNA and alters its conformation. May be involved in global regulation of gene expression. Binds specifically and non-specifically to DNA, preferentially to the 4 bp broken palindrome 5'-GTnAC-3'. Affects expression of a wide variety of genes, encoding both structural and metabolic proteins. In Borreliella burgdorferi (strain ATCC 35210 / DSM 4680 / CIP 102532 / B31) (Borrelia burgdorferi), this protein is Nucleoid-associated protein EbfC.